Consider the following 298-residue polypeptide: Glutamyl-Q tRNA(Asp) synthetase (298 aa).

L-glutamate-binding positions include 9 to 13 (RFAPS) and E45. Positions 12–22 (PSPSGELHFGS) match the 'HIGH' region motif. The Zn(2+) site is built by C101, C103, Y115, and C119. The L-glutamate site is built by Y172 and R190. A 'KMSKS' region motif is present at residues 228–232 (KLSKQ). An ATP-binding site is contributed by K231.

Belongs to the class-I aminoacyl-tRNA synthetase family. GluQ subfamily. Requires Zn(2+) as cofactor.

Catalyzes the tRNA-independent activation of glutamate in presence of ATP and the subsequent transfer of glutamate onto a tRNA(Asp). Glutamate is transferred on the 2-amino-5-(4,5-dihydroxy-2-cyclopenten-1-yl) moiety of the queuosine in the wobble position of the QUC anticodon. This Citrobacter koseri (strain ATCC BAA-895 / CDC 4225-83 / SGSC4696) protein is Glutamyl-Q tRNA(Asp) synthetase.